The following is a 110-amino-acid chain: MFELKTLFLFLATALAEIVGCYLPYLWLKRDGSAWLLVPAAASLALFAWLLTLHPTDAGRTYAAYGGVYVSVAVLWLWAVDGVRPTAWDMAGSLLALTGMAIIMFGPRHA.

Helical transmembrane passes span 7–27, 33–53, 63–83, and 87–107; these read LFLF…PYLW, SAWL…LLTL, AAYG…VDGV, and AWDM…MFGP.

The protein belongs to the UPF0060 family.

The protein resides in the cell inner membrane. This chain is UPF0060 membrane protein Nmul_A0351, found in Nitrosospira multiformis (strain ATCC 25196 / NCIMB 11849 / C 71).